Consider the following 118-residue polypeptide: Putative pterin-4-alpha-carbinolamine dehydratase (118 aa).

The protein belongs to the pterin-4-alpha-carbinolamine dehydratase family.

The enzyme catalyses (4aS,6R)-4a-hydroxy-L-erythro-5,6,7,8-tetrahydrobiopterin = (6R)-L-erythro-6,7-dihydrobiopterin + H2O. This chain is Putative pterin-4-alpha-carbinolamine dehydratase, found in Xanthomonas campestris pv. campestris (strain B100).